Here is a 555-residue protein sequence, read N- to C-terminus: Serine/threonine-protein kinase Nek4 (555 aa).

Residues 4–258 enclose the Protein kinase domain; sequence YEVLEQIGKG…ANELLNHPHL (255 aa). ATP contacts are provided by residues 10 to 18 and Lys-33; that span reads IGKGSFGSA. The Proton acceptor role is filled by Asp-129. Disordered regions lie at residues 288-328, 346-372, and 443-477; these read LKER…MFNG, QRQEEAKKQSGAARTPRVAGTSAKAST, and NRETASRREVARHSFSSPPCPPHGEDNSNGSITKD. The segment covering 304 to 320 has biased composition (polar residues); sequence PSVSDTEAGSVSSSGKA.

It belongs to the protein kinase superfamily. NEK Ser/Thr protein kinase family. NIMA subfamily.

It carries out the reaction L-seryl-[protein] + ATP = O-phospho-L-seryl-[protein] + ADP + H(+). It catalyses the reaction L-threonyl-[protein] + ATP = O-phospho-L-threonyl-[protein] + ADP + H(+). May be involved in plant development processes. This Arabidopsis thaliana (Mouse-ear cress) protein is Serine/threonine-protein kinase Nek4 (NEK4).